Here is a 266-residue protein sequence, read N- to C-terminus: 3-methyl-2-oxobutanoate hydroxymethyltransferase 2 (266 aa).

Aspartate 45 and aspartate 84 together coordinate Mg(2+). 3-methyl-2-oxobutanoate is bound by residues 45–46 (DS), aspartate 84, and lysine 112. Residue glutamate 114 participates in Mg(2+) binding. Glutamate 181 (proton acceptor) is an active-site residue.

This sequence belongs to the PanB family. In terms of assembly, homodecamer; pentamer of dimers. Requires Mg(2+) as cofactor.

Its subcellular location is the cytoplasm. The enzyme catalyses 3-methyl-2-oxobutanoate + (6R)-5,10-methylene-5,6,7,8-tetrahydrofolate + H2O = 2-dehydropantoate + (6S)-5,6,7,8-tetrahydrofolate. Its pathway is cofactor biosynthesis; (R)-pantothenate biosynthesis; (R)-pantoate from 3-methyl-2-oxobutanoate: step 1/2. Functionally, catalyzes the reversible reaction in which hydroxymethyl group from 5,10-methylenetetrahydrofolate is transferred onto alpha-ketoisovalerate to form ketopantoate. The protein is 3-methyl-2-oxobutanoate hydroxymethyltransferase 2 of Pseudomonas aeruginosa (strain UCBPP-PA14).